A 261-amino-acid polypeptide reads, in one-letter code: uncharacterized protein (261 aa).

Transmembrane regions (helical) follow at residues 38–58 (FIYL…ITLL), 134–154 (YTLM…LALI), 163–183 (ILIN…TYVL), 195–215 (YMGL…LFFL), and 219–239 (HKSV…CLKV).

It localises to the membrane. This is an uncharacterized protein from Dictyostelium discoideum (Social amoeba).